Here is a 237-residue protein sequence, read N- to C-terminus: Uridylate kinase (237 aa).

10-13 (KLSG) is an ATP binding site. Glycine 52 contacts UMP. Glycine 53 and arginine 57 together coordinate ATP. UMP-binding positions include aspartate 72 and 133-140 (TGNPFFTT). ATP is bound by residues threonine 160, tyrosine 166, and aspartate 169.

This sequence belongs to the UMP kinase family. As to quaternary structure, homohexamer.

The protein localises to the cytoplasm. It carries out the reaction UMP + ATP = UDP + ADP. It functions in the pathway pyrimidine metabolism; CTP biosynthesis via de novo pathway; UDP from UMP (UMPK route): step 1/1. Its activity is regulated as follows. Inhibited by UTP. Catalyzes the reversible phosphorylation of UMP to UDP. The protein is Uridylate kinase of Thiobacillus denitrificans (strain ATCC 25259 / T1).